The primary structure comprises 362 residues: Putative HLA class I histocompatibility antigen, alpha chain H (362 aa).

Residues 1-24 form the signal peptide; the sequence is MVLMAPRTLLLLLSGALALTQTWA. The tract at residues 25–114 is alpha-1; that stretch reads RSHSMRYFYT…ALRYYNQSEG (90 aa). The Extracellular segment spans residues 25–308; that stretch reads RSHSMRYFYT…EPSSQPTVPI (284 aa). Asn110 carries N-linked (GlcNAc...) asparagine glycosylation. An alpha-2 region spans residues 115-206; that stretch reads GSHTMQVMYG…ENGKETLQRA (92 aa). The interval 207 to 298 is alpha-3; that stretch reads DPPKTHMTHH…GLPEPLTLRW (92 aa). One can recognise an Ig-like C1-type domain in the interval 209-297; the sequence is PKTHMTHHPI…EGLPEPLTLR (89 aa). A disulfide bridge connects residues Cys227 and Cys283. Positions 299–308 are connecting peptide; that stretch reads EPSSQPTVPI. Residues 309–332 traverse the membrane as a helical segment; sequence VGIVAGLVLLVAVVTGAVVAAVMW. Topologically, residues 333–362 are cytoplasmic; that stretch reads RKKSSDRKGGSYSQAASSNSAQGSDVSLTA. The disordered stretch occupies residues 337 to 362; sequence SDRKGGSYSQAASSNSAQGSDVSLTA. The segment covering 342–356 has biased composition (low complexity); the sequence is GSYSQAASSNSAQGS.

Belongs to the MHC class I family. Heterodimer of an alpha chain and a beta chain (beta-2-microglobulin).

Its subcellular location is the cell membrane. In terms of biological role, involved in the presentation of foreign antigens to the immune system. This Homo sapiens (Human) protein is Putative HLA class I histocompatibility antigen, alpha chain H (HLA-H).